The primary structure comprises 428 residues: 3-phosphoshikimate 1-carboxyvinyltransferase (428 aa).

3 residues coordinate 3-phosphoshikimate: K23, S24, and R28. K23 serves as a coordination point for phosphoenolpyruvate. The phosphoenolpyruvate site is built by G97 and R125. S170, S171, Q172, S198, D314, N337, and K341 together coordinate 3-phosphoshikimate. Q172 contributes to the phosphoenolpyruvate binding site. Catalysis depends on D314, which acts as the Proton acceptor. Residues R345, R387, and K412 each coordinate phosphoenolpyruvate.

Belongs to the EPSP synthase family. Monomer.

It is found in the cytoplasm. It carries out the reaction 3-phosphoshikimate + phosphoenolpyruvate = 5-O-(1-carboxyvinyl)-3-phosphoshikimate + phosphate. The protein operates within metabolic intermediate biosynthesis; chorismate biosynthesis; chorismate from D-erythrose 4-phosphate and phosphoenolpyruvate: step 6/7. Catalyzes the transfer of the enolpyruvyl moiety of phosphoenolpyruvate (PEP) to the 5-hydroxyl of shikimate-3-phosphate (S3P) to produce enolpyruvyl shikimate-3-phosphate and inorganic phosphate. This chain is 3-phosphoshikimate 1-carboxyvinyltransferase, found in Hamiltonella defensa subsp. Acyrthosiphon pisum (strain 5AT).